We begin with the raw amino-acid sequence, 116 residues long: MQIVALTLVAFVAIAGASCPYAAPAPAYSAPAASSGYPAPPCPTNYLFSCQPNLAPAPCAQEAPAYGSAGAYTEQVPHYVGSPNREQLQQFHQRIGMAALMEELRGLGQGIQGQQY.

The signal sequence occupies residues 1–17 (MQIVALTLVAFVAIAGA). The VM domain maps to 36 to 73 (GYPAPPCPTNYLFSCQPNLAPAPCAQEAPAYGSAGAYT).

It belongs to the vitelline membrane family. In terms of processing, sulfated by pip; may be involved in embryo dorsal-ventral axis determination. Sulfation by pip may occur on covalently bound glycosaminoglycans. Expressed in stage 10 egg-chambers, localized in the outer eggshell (chorion membrane).

It localises to the secreted. Functionally, major early eggshell protein. The polypeptide is Vitelline membrane protein Vm32E (Drosophila melanogaster (Fruit fly)).